A 312-amino-acid chain; its full sequence is RNA binding protein fox-1 homolog 3 (312 aa).

Positions 1 to 29 (MAQPYPPAQYPPPPQNGIPAEYAPPPPHP) are enriched in pro residues. Residues 1 to 104 (MAQPYPPAQY…KQQPKRLHVS (104 aa)) are disordered. The span at 49-87 (TPAQTHPEQPGSEASTQPIAGTQTVPQTDEAAQTDSQPL) shows a compositional bias: polar residues. The RRM domain occupies 100-175 (RLHVSNIPFR…RKIEVNNATA (76 aa)). Arg223 carries the asymmetric dimethylarginine; alternate modification. Arg223 carries the post-translational modification Omega-N-methylarginine; alternate. Arg272 is subject to Asymmetric dimethylarginine.

The protein resides in the nucleus. The protein localises to the cytoplasm. In terms of biological role, pre-mRNA alternative splicing regulator. Regulates alternative splicing of RBFOX2 to enhance the production of mRNA species that are targeted for nonsense-mediated decay (NMD). The polypeptide is RNA binding protein fox-1 homolog 3 (RBFOX3) (Homo sapiens (Human)).